A 198-amino-acid chain; its full sequence is Guanylate kinase (198 aa).

Positions 8 to 188 (GRVVVLSGPS…ACSELVSLLV (181 aa)) constitute a Guanylate kinase-like domain. 15 to 22 (GPSAVGKS) lines the ATP pocket.

The protein belongs to the guanylate kinase family.

Its subcellular location is the cytoplasm. The catalysed reaction is GMP + ATP = GDP + ADP. In terms of biological role, essential for recycling GMP and indirectly, cGMP. This is Guanylate kinase from Mycobacterium sp. (strain MCS).